Reading from the N-terminus, the 523-residue chain is Probable glucose-1-phosphate adenylyltransferase large subunit, chloroplastic (523 aa).

Belongs to the bacterial/plant glucose-1-phosphate adenylyltransferase family. As to quaternary structure, heterotetramer.

It localises to the plastid. Its subcellular location is the chloroplast. It carries out the reaction alpha-D-glucose 1-phosphate + ATP + H(+) = ADP-alpha-D-glucose + diphosphate. The protein operates within glycan biosynthesis; starch biosynthesis. With respect to regulation, activated by 3'phosphoglycerate, inhibited by orthophosphate. Allosteric regulation. This protein plays a role in synthesis of starch. It catalyzes the synthesis of the activated glycosyl donor, ADP-glucose from Glc-1-P and ATP. This is Probable glucose-1-phosphate adenylyltransferase large subunit, chloroplastic from Arabidopsis thaliana (Mouse-ear cress).